Consider the following 231-residue polypeptide: RING finger protein 141 (231 aa).

The N-myristoyl glycine moiety is linked to residue G2. The RING-type zinc finger occupies C156–R193.

The protein localises to the membrane. Its function is as follows. May be involved in spermatogenesis. This chain is RING finger protein 141 (RNF141), found in Canis lupus familiaris (Dog).